The following is a 331-amino-acid chain: N-arachidonyl glycine receptor (331 aa).

The Extracellular portion of the chain corresponds to 1–26 (MITLNNQDQPVPFNSSHPDEYKIAAL). N-linked (GlcNAc...) asparagine glycosylation occurs at Asn14. Residues 27 to 47 (VFYSCIFIIGLFVNITALWVF) form a helical membrane-spanning segment. The Cytoplasmic segment spans residues 48 to 56 (SCTTKKRTT). A helical membrane pass occupies residues 57-77 (VTIYMMNVALVDLIFIMTLPF). The Extracellular segment spans residues 78-95 (RMFYYAKDEWPFGEYFCQ). Residues Cys94 and Cys172 are joined by a disulfide bond. A helical membrane pass occupies residues 96 to 116 (ILGALTVFYPSIALWLLAFIS). At 117–138 (ADRYMAIVQPKYAKELKNTCKA) the chain is on the cytoplasmic side. A helical membrane pass occupies residues 139 to 159 (VLACVGVWIMTLTTTTPLLLL). The Extracellular segment spans residues 160-191 (YKDPDKDSTPATCLKISDIIYLKAVNVLNLTR). A helical transmembrane segment spans residues 192–212 (LTFFFLIPLFIMIGCYLVIIH). The Cytoplasmic segment spans residues 213-232 (NLLHGRTSKLKPKVKEKSIR). A helical transmembrane segment spans residues 233-253 (IIITLLVQVLVCFMPFHICFA). At 254–268 (FLMLGTGENSYNPWG) the chain is on the extracellular side. Residues 269–289 (AFTTFLMNLSTCLDVILYYIV) form a helical membrane-spanning segment. Topologically, residues 290-331 (SKQFQARVISVMLYRNYLRSMRRKSFRSGSLRSLSNINSEML) are cytoplasmic. Ser322 bears the Phosphoserine mark.

Belongs to the G-protein coupled receptor 1 family. As to expression, expressed in midpiece of spermatozoon (at protein level). Most abundant in testis and spleen. Highly expressed in CD4 and CD8-positive T-cells as well as CD19-positive B-cells.

It localises to the cell membrane. The protein localises to the cytoplasmic vesicle membrane. G protein-coupled receptor (GPCR) that plays a role in diverse physiological processes particularly within the immune and nervous systems. Becomes active when triggered by various endogenous ligands including endocannabinoid N-arachidonyl glycine (NAGly), delta-9-tetrahydrocannabinol or resolvin D2/RvD2 derived from the omega-3 fatty acid docosahexaenoic acid (DHA). Upon RvD2 binding, facilitates the resolution of inflammation, aiding in tissue repair and homeostasis. Mechanistically, RvD2 ligation initiates Galphas protein coupling, activation of cAMP-PKA signaling pathway and phosphorylation of STAT3, leading to RvD2-stimulated macrophage phagocytosis. Mediates NAGly-induced process of reorganization of actin filaments and induction of acrosomal exocytosis. Activation by N-arachidonoyl glycine (NAGly) can also induce apoptosis in macrophages. Plays a role in homeostasis of CD8+ subsets of intraepithelial lymphocytes (IELs) (CD8alphaalpha and CD8alphabeta IELs) in small intestine by supporting preferential migration of CD8alphaalpha T-cells to intraepithelial compartment over lamina propria compartment, and by mediating their reconstitution into small intestine after bone marrow transplant. Also participates in hypotensive responses, mediating reduction in intraocular and blood pressure. This is N-arachidonyl glycine receptor (GPR18) from Homo sapiens (Human).